Consider the following 150-residue polypeptide: D-aminoacyl-tRNA deacylase (150 aa).

Residues 137–138 (GP) carry the Gly-cisPro motif, important for rejection of L-amino acids motif.

It belongs to the DTD family. As to quaternary structure, homodimer.

The protein localises to the cytoplasm. It carries out the reaction glycyl-tRNA(Ala) + H2O = tRNA(Ala) + glycine + H(+). The enzyme catalyses a D-aminoacyl-tRNA + H2O = a tRNA + a D-alpha-amino acid + H(+). Functionally, an aminoacyl-tRNA editing enzyme that deacylates mischarged D-aminoacyl-tRNAs. Also deacylates mischarged glycyl-tRNA(Ala), protecting cells against glycine mischarging by AlaRS. Acts via tRNA-based rather than protein-based catalysis; rejects L-amino acids rather than detecting D-amino acids in the active site. By recycling D-aminoacyl-tRNA to D-amino acids and free tRNA molecules, this enzyme counteracts the toxicity associated with the formation of D-aminoacyl-tRNA entities in vivo and helps enforce protein L-homochirality. This chain is D-aminoacyl-tRNA deacylase, found in Listeria monocytogenes serotype 4b (strain CLIP80459).